The following is a 302-amino-acid chain: 4-hydroxy-tetrahydrodipicolinate synthase (302 aa).

Thr-49 is a pyruvate binding site. Residue Tyr-137 is the Proton donor/acceptor of the active site. Catalysis depends on Lys-166, which acts as the Schiff-base intermediate with substrate. Ile-208 contributes to the pyruvate binding site.

This sequence belongs to the DapA family. As to quaternary structure, homotetramer; dimer of dimers.

Its subcellular location is the cytoplasm. The enzyme catalyses L-aspartate 4-semialdehyde + pyruvate = (2S,4S)-4-hydroxy-2,3,4,5-tetrahydrodipicolinate + H2O + H(+). It functions in the pathway amino-acid biosynthesis; L-lysine biosynthesis via DAP pathway; (S)-tetrahydrodipicolinate from L-aspartate: step 3/4. In terms of biological role, catalyzes the condensation of (S)-aspartate-beta-semialdehyde [(S)-ASA] and pyruvate to 4-hydroxy-tetrahydrodipicolinate (HTPA). The protein is 4-hydroxy-tetrahydrodipicolinate synthase of Chloroherpeton thalassium (strain ATCC 35110 / GB-78).